Consider the following 458-residue polypeptide: Repulsive guidance molecule A (458 aa).

The N-terminal stretch at 1–53 (MGGPGPRRAGTSRERLVVTGRAGWMGMGRGAGRSALGFWPTLAFLLCSFPAAT) is a signal peptide. The propeptide at 54–176 (SPCKILKCNS…NYTHCGLFGD (123 aa)) is removed in mature form. Over residues 121–133 (HNCSKDGPTSQPR) the composition is skewed to polar residues. The interval 121–149 (HNCSKDGPTSQPRLHTLPPAGDSQERSDS) is disordered. N-linked (GlcNAc...) asparagine glycans are attached at residues N122 and N167. 2 disulfide bridges follow: C153–C234 and C171–C323. N397 is a glycosylation site (N-linked (GlcNAc...) asparagine). The GPI-anchor amidated alanine moiety is linked to residue A433. Positions 434–458 (AGLPLAPQPLLGALILLLALFPVFC) are cleaved as a propeptide — removed in mature form.

This sequence belongs to the repulsive guidance molecule (RGM) family. As to quaternary structure, interacts with NEO1, BMP2 and BMP4. Autocatalytically cleaved at low pH; the two chains remain linked via two disulfide bonds.

The protein resides in the cell membrane. Its function is as follows. Member of the repulsive guidance molecule (RGM) family that performs several functions in the developing and adult nervous system. Regulates cephalic neural tube closure, inhibits neurite outgrowth and cortical neuron branching, and the formation of mature synapses. Binding to its receptor NEO1/neogenin induces activation of RHOA-ROCK1/Rho-kinase signaling pathway through UNC5B-ARHGEF12/LARG-PTK2/FAK1 cascade, leading to collapse of the neuronal growth cone and neurite outgrowth inhibition. Furthermore, RGMA binding to NEO1/neogenin leads to HRAS inactivation by influencing HRAS-PTK2/FAK1-AKT1 pathway. It also functions as a bone morphogenetic protein (BMP) coreceptor that may signal through SMAD1, SMAD5, and SMAD8. In Macaca fascicularis (Crab-eating macaque), this protein is Repulsive guidance molecule A (RGMA).